The sequence spans 592 residues: Bifunctional dolabella-3,7-dien-18-ol synthase/dolathalia-3,7,11-triene synthase TPS20, chloroplastic (592 aa).

A chloroplast-targeting transit peptide spans 1–52 (MEAITKNGSLSQTLVHCGPKSLSSFIPVRCLRFSKNPFPKKLVVTRARTSIN). 5 residues coordinate Mg(2+): aspartate 349, aspartate 353, aspartate 491, threonine 495, and glutamate 499. The DDXXD motif signature appears at 349–353 (DDLYD).

It belongs to the terpene synthase family. Tpsa subfamily. It depends on Mg(2+) as a cofactor. Mn(2+) is required as a cofactor.

The protein localises to the plastid. Its subcellular location is the chloroplast. The enzyme catalyses (2E,6E,10E)-geranylgeranyl diphosphate + H2O = (3E,7E)-dolabella-3,7-dien-18-ol + diphosphate. It catalyses the reaction (2E,6E,10E)-geranylgeranyl diphosphate = (3E,7E)-dolathalia-3,7,11-triene + diphosphate. It functions in the pathway secondary metabolite biosynthesis; terpenoid biosynthesis. Its function is as follows. Involved in the biosynthesis of diterpenes in roots. Possesses dolabella-3,7-dien-18-ol synthase activity and dolathalia-3,7,11-triene synthase activity in vitro. Catalyzes the formation of dolabella-3,7-dien-18-ol and dolathalia-3,7,11-triene from geranygeranyl diphosphate (GGPP). Does not seem to be involved in sesquiterpene biosynthesis. This Arabidopsis thaliana (Mouse-ear cress) protein is Bifunctional dolabella-3,7-dien-18-ol synthase/dolathalia-3,7,11-triene synthase TPS20, chloroplastic.